A 461-amino-acid polypeptide reads, in one-letter code: Siroheme synthase (461 aa).

A precorrin-2 dehydrogenase /sirohydrochlorin ferrochelatase region spans residues 1-204 (MRYLPLFVYL…GNFRKANRVI (204 aa)). Residues 22-23 (IV) and 43-44 (KT) each bind NAD(+). At Ser128 the chain carries Phosphoserine. A uroporphyrinogen-III C-methyltransferase region spans residues 218 to 461 (GSVSLVGAGP…HNEISWFGNG (244 aa)). Position 227 (Pro227) interacts with S-adenosyl-L-methionine. Asp250 serves as the catalytic Proton acceptor. The active-site Proton donor is the Lys272. S-adenosyl-L-methionine-binding positions include 303–305 (GGD), Ile308, Met386, and Gly415.

This sequence in the N-terminal section; belongs to the precorrin-2 dehydrogenase / sirohydrochlorin ferrochelatase family. The protein in the C-terminal section; belongs to the precorrin methyltransferase family.

It carries out the reaction uroporphyrinogen III + 2 S-adenosyl-L-methionine = precorrin-2 + 2 S-adenosyl-L-homocysteine + H(+). The enzyme catalyses precorrin-2 + NAD(+) = sirohydrochlorin + NADH + 2 H(+). It catalyses the reaction siroheme + 2 H(+) = sirohydrochlorin + Fe(2+). The protein operates within cofactor biosynthesis; adenosylcobalamin biosynthesis; precorrin-2 from uroporphyrinogen III: step 1/1. Its pathway is cofactor biosynthesis; adenosylcobalamin biosynthesis; sirohydrochlorin from precorrin-2: step 1/1. It participates in porphyrin-containing compound metabolism; siroheme biosynthesis; precorrin-2 from uroporphyrinogen III: step 1/1. It functions in the pathway porphyrin-containing compound metabolism; siroheme biosynthesis; siroheme from sirohydrochlorin: step 1/1. The protein operates within porphyrin-containing compound metabolism; siroheme biosynthesis; sirohydrochlorin from precorrin-2: step 1/1. Functionally, multifunctional enzyme that catalyzes the SAM-dependent methylations of uroporphyrinogen III at position C-2 and C-7 to form precorrin-2 via precorrin-1. Then it catalyzes the NAD-dependent ring dehydrogenation of precorrin-2 to yield sirohydrochlorin. Finally, it catalyzes the ferrochelation of sirohydrochlorin to yield siroheme. The chain is Siroheme synthase from Blochmanniella floridana.